The following is a 521-amino-acid chain: Cytochrome P450 1A1 (521 aa).

F229 contacts substrate. C463 serves as a coordination point for heme.

Belongs to the cytochrome P450 family. Requires heme as cofactor.

It is found in the endoplasmic reticulum membrane. It localises to the microsome membrane. The enzyme catalyses an organic molecule + reduced [NADPH--hemoprotein reductase] + O2 = an alcohol + oxidized [NADPH--hemoprotein reductase] + H2O + H(+). Cytochromes P450 are a group of heme-thiolate monooxygenases. They oxidize a variety of structurally unrelated compounds, including steroids, fatty acids, and xenobiotics. The protein is Cytochrome P450 1A1 (cyp1a1) of Limanda limanda (Common dab).